The following is a 682-amino-acid chain: Tail-specific protease (682 aa).

The signal sequence occupies residues 1-22; it reads MNMFFRLTALAGLLAIAGQTFA. A PDZ domain is found at 238–322; sequence NTEMSLSLEG…SKVRLEILPA (85 aa). Residues Ser452, Asp463, and Lys477 each act as charge relay system in the active site. Positions 635–650 are enriched in basic and acidic residues; sequence GKPELKKLDDLPKDYQ. The disordered stretch occupies residues 635–654; the sequence is GKPELKKLDDLPKDYQEPDP.

It belongs to the peptidase S41A family.

The protein localises to the cell inner membrane. The catalysed reaction is The enzyme shows specific recognition of a C-terminal tripeptide, Xaa-Yaa-Zaa, in which Xaa is preferably Ala or Leu, Yaa is preferably Ala or Tyr, and Zaa is preferably Ala, but then cleaves at a variable distance from the C-terminus. A typical cleavage is -Ala-Ala-|-Arg-Ala-Ala-Lys-Glu-Asn-Tyr-Ala-Leu-Ala-Ala.. Involved in the cleavage of a C-terminal peptide of 11 residues from the precursor form of penicillin-binding protein 3 (PBP3). May be involved in protection of the bacterium from thermal and osmotic stresses. This Escherichia coli (strain K12) protein is Tail-specific protease (prc).